We begin with the raw amino-acid sequence, 515 residues long: Protein translocase subunit SecD (515 aa).

Transmembrane regions (helical) follow at residues 5–25 (LIAKLLLIAAVIGFCIHLATP), 353–373 (KGILSVTIGMALVLLFMVAYY), 375–395 (LSGLLANMALLMNLIILMGLL), 398–418 (FGATLTLPGIAGIILTIGIAV), 450–470 (FSTILDANITTLIVAVILFQF), and 477–497 (GFAVTLSIGILASMFTAILCT).

It belongs to the SecD/SecF family. SecD subfamily. Forms a complex with SecF. Part of the essential Sec protein translocation apparatus which comprises SecA, SecYEG and auxiliary proteins SecDF. Other proteins may also be involved.

The protein resides in the cell inner membrane. In terms of biological role, part of the Sec protein translocase complex. Interacts with the SecYEG preprotein conducting channel. SecDF uses the proton motive force (PMF) to complete protein translocation after the ATP-dependent function of SecA. The polypeptide is Protein translocase subunit SecD (Desulfurispirillum indicum (strain ATCC BAA-1389 / DSM 22839 / S5)).